The sequence spans 336 residues: Alcohol dehydrogenase (336 aa).

Zn(2+) contacts are provided by Cys-37, His-58, Cys-89, Cys-92, Cys-95, Cys-103, and Cys-145.

This sequence belongs to the zinc-containing alcohol dehydrogenase family. Zn(2+) is required as a cofactor.

It catalyses the reaction a primary alcohol + NAD(+) = an aldehyde + NADH + H(+). The enzyme catalyses a secondary alcohol + NAD(+) = a ketone + NADH + H(+). The protein is Alcohol dehydrogenase (adh) of Staphylococcus aureus (strain USA300).